Consider the following 79-residue polypeptide: Neurotoxin ShK-like1 (79 aa).

Residues 1-25 (MSRKLLAVLMVCTFFLIAASMGTNA) form the signal peptide. The propeptide occupies 26 to 35 (LPFHEGIERR). The ShKT domain maps to 39–78 (CVDKMPFVCMRKDIPAICKNRNHRSYAFIMDVCRKTCGQC). 3 disulfides stabilise this stretch: Cys39–Cys78, Cys47–Cys71, and Cys56–Cys75.

As to expression, expressed in nematocytes (in planulae and primary polyps). Is localized predominantly in the body column nematocytes and not in the tentacles (in primary polyps).

The protein resides in the nematocyst. It localises to the secreted. In terms of biological role, neurotoxin. In vivo, induces contraction paralysis followed by death (within 2 hours) on zebrafish larvae. Also induces body contraction in Nematostella 11-dpf polyps. This chain is Neurotoxin ShK-like1, found in Nematostella vectensis (Starlet sea anemone).